A 68-amino-acid chain; its full sequence is Large ribosomal subunit protein bL31 (68 aa).

Residues cysteine 17, cysteine 19, cysteine 37, and cysteine 40 each contribute to the Zn(2+) site.

The protein belongs to the bacterial ribosomal protein bL31 family. Type A subfamily. As to quaternary structure, part of the 50S ribosomal subunit. The cofactor is Zn(2+).

Its function is as follows. Binds the 23S rRNA. This Dehalococcoides mccartyi (strain CBDB1) protein is Large ribosomal subunit protein bL31.